The following is a 181-amino-acid chain: UPF0301 protein COXBURSA331_A2219 (181 aa).

It belongs to the UPF0301 (AlgH) family.

This chain is UPF0301 protein COXBURSA331_A2219, found in Coxiella burnetii (strain RSA 331 / Henzerling II).